The sequence spans 108 residues: Parvalbumin beta (108 aa).

The residue at position 1 (A1) is an N-acetylalanine. C11 and C33 are oxidised to a cystine. 2 consecutive EF-hand domains span residues 38 to 73 (KSAD…FKAG) and 77 to 108 (LTDA…LVKA). D51, D53, S55, F57, E59, E62, D90, D92, D94, A96, and E101 together coordinate Ca(2+).

It belongs to the parvalbumin family.

In terms of biological role, in muscle, parvalbumin is thought to be involved in relaxation after contraction. It binds two calcium ions. This is Parvalbumin beta from Merlangius merlangus (Whiting).